A 99-amino-acid polypeptide reads, in one-letter code: HTH-type transcriptional regulator YgaV (99 aa).

The HTH arsR-type domain occupies 7-99; it reads LQASAEQAAA…IATLKNVYCP (93 aa). The H-T-H motif DNA-binding region spans 41 to 64; it reads AGELTRITGLSASATSQHLARMRD.

With respect to regulation, in the presence of H(2)S, two cysteine residues form an intramolecular tetrasulfide bond, which attenuates the binding of YgaV to DNA. Both unmodified YgaV and sulfide-modified YgaV can probably function as either a repressor or an activator. Binds heme, which may influence the DNA-binding affinity. Its function is as follows. Transcriptional regulator that regulates large-scale gene expression in response to sulfide. May act as a global regulator responsible for redox homeostasis. It functions as both a repressor and an activator. In the absence of sulfide compounds, it negatively regulates many anaerobic respiratory genes, including formate, fumarate, lactate, nitrate and nitrite reductase genes. In the presence of hydrogen sulfide (H(2)S), YgaV activity is attenuated, leading to the expression of anaerobic respiratory and ROS scavenging genes, which contributes to redox homeostasis, reactive oxygen species (ROS) scavenging and antibiotic tolerance. It responds to H(2)O(2) scavenging and increases antibiotic tolerance under H(2)S-atmospheric conditions. It also negatively regulates its own expression by binding to the ygaVP promoter region. May also be involved in regulatory mechanisms that operate independently of sulfide. The polypeptide is HTH-type transcriptional regulator YgaV (ygaV) (Escherichia coli (strain K12)).